The primary structure comprises 234 residues: Glycerol-3-phosphate acyltransferase (234 aa).

6 helical membrane passes run Leu-4–Gly-24, Thr-56–Phe-76, Val-90–Ala-110, Ala-122–Leu-142, Val-152–Phe-172, and Phe-191–Ile-211.

This sequence belongs to the PlsY family. Probably interacts with PlsX.

Its subcellular location is the cell inner membrane. It carries out the reaction an acyl phosphate + sn-glycerol 3-phosphate = a 1-acyl-sn-glycero-3-phosphate + phosphate. It participates in lipid metabolism; phospholipid metabolism. Its function is as follows. Catalyzes the transfer of an acyl group from acyl-phosphate (acyl-PO(4)) to glycerol-3-phosphate (G3P) to form lysophosphatidic acid (LPA). This enzyme utilizes acyl-phosphate as fatty acyl donor, but not acyl-CoA or acyl-ACP. The sequence is that of Glycerol-3-phosphate acyltransferase from Chlorobium chlorochromatii (strain CaD3).